The primary structure comprises 169 residues: MKTYRRQIREKILQALYTVELRGITLDEAAGWLLTEEILADPNAMKFFNLLLSSIKAHREEIDNYIAQQTFNWDMSRIAIIDKNIIRMALTEILYCEDIPPKVSINEAIEIAKKFNSTDKSSKFVNGILDAIFNKLKTEGKVHKNGRGLIDQSFSRPQKPESEATEIEE.

Residues 147–169 (RGLIDQSFSRPQKPESEATEIEE) form a disordered region.

It belongs to the NusB family.

Involved in transcription antitermination. Required for transcription of ribosomal RNA (rRNA) genes. Binds specifically to the boxA antiterminator sequence of the ribosomal RNA (rrn) operons. This Chlorobium chlorochromatii (strain CaD3) protein is Transcription antitermination protein NusB.